The chain runs to 157 residues: Phosphopantetheine adenylyltransferase (157 aa).

Ser8 contributes to the substrate binding site. Residues 8 to 9 (SF) and His16 each bind ATP. 3 residues coordinate substrate: Lys40, Thr72, and Arg86. ATP contacts are provided by residues 87 to 89 (GLR), Glu97, and 122 to 128 (YSFLSSS).

The protein belongs to the bacterial CoaD family. As to quaternary structure, homohexamer. It depends on Mg(2+) as a cofactor.

It localises to the cytoplasm. The catalysed reaction is (R)-4'-phosphopantetheine + ATP + H(+) = 3'-dephospho-CoA + diphosphate. It participates in cofactor biosynthesis; coenzyme A biosynthesis; CoA from (R)-pantothenate: step 4/5. Its function is as follows. Reversibly transfers an adenylyl group from ATP to 4'-phosphopantetheine, yielding dephospho-CoA (dPCoA) and pyrophosphate. The protein is Phosphopantetheine adenylyltransferase of Crocosphaera subtropica (strain ATCC 51142 / BH68) (Cyanothece sp. (strain ATCC 51142)).